A 721-amino-acid chain; its full sequence is Polyribonucleotide nucleotidyltransferase (721 aa).

Positions 495 and 501 each coordinate Mg(2+). One can recognise a KH domain in the interval P562–I621. In terms of domain architecture, S1 motif spans G631 to R699. The interval G700–N721 is disordered.

Belongs to the polyribonucleotide nucleotidyltransferase family. It depends on Mg(2+) as a cofactor.

The protein resides in the cytoplasm. It carries out the reaction RNA(n+1) + phosphate = RNA(n) + a ribonucleoside 5'-diphosphate. In terms of biological role, involved in mRNA degradation. Catalyzes the phosphorolysis of single-stranded polyribonucleotides processively in the 3'- to 5'-direction. This chain is Polyribonucleotide nucleotidyltransferase, found in Prochlorococcus marinus (strain MIT 9303).